Reading from the N-terminus, the 121-residue chain is MSKLTIEQFIAAIKEMSMLELNDLVKAIETEFGVSAAAPVAAAAAPVAAEAPTEVTIKLVEAGTNKVGVIKLIREITGLGLMEAKTAAETAGSVIKEDVKTEEANEIKKKFDELGAKVQLV.

It belongs to the bacterial ribosomal protein bL12 family. In terms of assembly, homodimer. Part of the ribosomal stalk of the 50S ribosomal subunit. Forms a multimeric L10(L12)X complex, where L10 forms an elongated spine to which 2 to 4 L12 dimers bind in a sequential fashion. Binds GTP-bound translation factors.

In terms of biological role, forms part of the ribosomal stalk which helps the ribosome interact with GTP-bound translation factors. Is thus essential for accurate translation. The chain is Large ribosomal subunit protein bL12 from Ureaplasma parvum serovar 3 (strain ATCC 27815 / 27 / NCTC 11736).